Consider the following 472-residue polypeptide: Calcitonin gene-related peptide type 1 receptor (472 aa).

Residues methionine 1 to alanine 28 form the signal peptide. The Extracellular portion of the chain corresponds to glutamate 29 to leucine 149. Intrachain disulfides connect cysteine 58–cysteine 84, cysteine 75–cysteine 115, and cysteine 98–cysteine 137. Residues asparagine 76, asparagine 128, and asparagine 133 are each glycosylated (N-linked (GlcNAc...) asparagine). A helical transmembrane segment spans residues asparagine 150–phenylalanine 174. Over tyrosine 175 to threonine 185 the chain is Cytoplasmic. Residues leucine 186 to valine 208 traverse the membrane as a helical segment. The Extracellular portion of the chain corresponds to alanine 209–proline 219. The chain crosses the membrane as a helical span at residues valine 220 to histidine 248. At threonine 249–leucine 262 the chain is on the cytoplasmic side. The helical transmembrane segment at methionine 263–alanine 283 threads the bilayer. The Extracellular portion of the chain corresponds to arginine 284 to histidine 299. Residues leucine 300–arginine 324 traverse the membrane as a helical segment. Residues valine 325–asparagine 339 lie on the Cytoplasmic side of the membrane. Residues leucine 340–leucine 361 form a helical membrane-spanning segment. Topologically, residues phenylalanine 362–aspartate 376 are extracellular. Residues tyrosine 377–phenylalanine 397 traverse the membrane as a helical segment. Over asparagine 398–methionine 472 the chain is Cytoplasmic.

Belongs to the G-protein coupled receptor 2 family.

Its subcellular location is the cell membrane. Functionally, may function as G protein-coupled receptor for calcitonin-gene-related peptides and adrenomedullin. Specificity may be modulated by accessory proteins. May activate cAMP-dependent pathway. This is Calcitonin gene-related peptide type 1 receptor (calcrl) from Xenopus tropicalis (Western clawed frog).